Consider the following 213-residue polypeptide: Protein MobE (213 aa).

In Acidithiobacillus ferrooxidans (Thiobacillus ferrooxidans), this protein is Protein MobE (mobE).